The primary structure comprises 353 residues: MAADLPEATVQNILDQESLKWVFVGGKGGVGKTTCSSILAICLASVRSSVLIISTDPAHNLSDAFQQRFTKSPTLVQGFSNLFAMEVDPTVETDDMAGTDGMDGLFSDLANAIPGIDEAMSFAEMLKLVQTMDYATIVFDTAPTGHTLRLLQFPATLEKGLSKLMSLKSRFGGLMTQMSRMFGMEDEFGEDALLGRLEGLKDVIEQVNRQFKDPDMTTFVCVCIPEFLSLYETERLVQELAKFEIDTHNIIINQVLYDDEDVESKLLRARMRMQQKYLDQFYMLYDDFNITKLPLLPEEVTGVEALKAFSHKFLTPYHPTTSRSNVEELERKVHTLRLQLKTAEEELERVKSG.

ATP is bound at residue 27–34 (KGGVGKTT). The active site involves aspartate 56. 2 residues coordinate ATP: glutamate 226 and asparagine 253. A coiled-coil region spans residues 320–353 (TTSRSNVEELERKVHTLRLQLKTAEEELERVKSG).

The protein belongs to the arsA ATPase family. Homodimer. Interacts with GET1 and GET4.

It is found in the cytoplasm. Its subcellular location is the cytosol. The protein localises to the endoplasmic reticulum. The catalysed reaction is ATP + H2O = ADP + phosphate + H(+). Functionally, ATPase required for the post-translational delivery of tail-anchored (TA) proteins to the endoplasmic reticulum. Recognizes and selectively binds the transmembrane domain of TA proteins in the cytosol. This complex then targets to the endoplasmic reticulum by membrane-bound receptors, where the tail-anchored protein is released for insertion. This process is regulated by ATP binding and hydrolysis. ATP binding drives the homodimer towards the closed dimer state, facilitating recognition of newly synthesized TA membrane proteins. ATP hydrolysis is required for insertion. Subsequently, the homodimer reverts towards the open dimer state, lowering its affinity for the membrane-bound receptor, and returning it to the cytosol to initiate a new round of targeting. Involved in the control of root hair growth through the regulation of syntaxin SYP123 expression. The protein is ATPase GET3A of Arabidopsis thaliana (Mouse-ear cress).